A 151-amino-acid polypeptide reads, in one-letter code: Deoxyuridine 5'-triphosphate nucleotidohydrolase (151 aa).

Residues 70–72, asparagine 83, 87–89, and methionine 97 contribute to the substrate site; these read RSG and LID.

Belongs to the dUTPase family. Mg(2+) is required as a cofactor.

It carries out the reaction dUTP + H2O = dUMP + diphosphate + H(+). Its pathway is pyrimidine metabolism; dUMP biosynthesis; dUMP from dCTP (dUTP route): step 2/2. Its function is as follows. This enzyme is involved in nucleotide metabolism: it produces dUMP, the immediate precursor of thymidine nucleotides and it decreases the intracellular concentration of dUTP so that uracil cannot be incorporated into DNA. In Glaesserella parasuis serovar 5 (strain SH0165) (Haemophilus parasuis), this protein is Deoxyuridine 5'-triphosphate nucleotidohydrolase.